A 228-amino-acid chain; its full sequence is Orotidine 5'-phosphate decarboxylase (228 aa).

Residues aspartate 20, lysine 42, aspartate 70 to threonine 79, serine 127, proline 180 to glycine 190, glycine 202, and arginine 203 contribute to the substrate site. Residue lysine 72 is the Proton donor of the active site.

The protein belongs to the OMP decarboxylase family. Type 1 subfamily. In terms of assembly, homodimer.

It catalyses the reaction orotidine 5'-phosphate + H(+) = UMP + CO2. The protein operates within pyrimidine metabolism; UMP biosynthesis via de novo pathway; UMP from orotate: step 2/2. Catalyzes the decarboxylation of orotidine 5'-monophosphate (OMP) to uridine 5'-monophosphate (UMP). This chain is Orotidine 5'-phosphate decarboxylase (pyrF), found in Methanothermobacter thermautotrophicus (strain ATCC 29096 / DSM 1053 / JCM 10044 / NBRC 100330 / Delta H) (Methanobacterium thermoautotrophicum).